The following is a 426-amino-acid chain: Serine--tRNA ligase (426 aa).

The segment at 36–66 is disordered; the sequence is KRRHLQERTQDLQSQRNTISKEIGQKKAKGE. Residues 46-55 show a composition bias toward polar residues; it reads DLQSQRNTIS. 233–235 provides a ligand contact to L-serine; that stretch reads TAE. Residue 264–266 participates in ATP binding; sequence RSE. Glutamate 287 provides a ligand contact to L-serine. ATP is bound at residue 351–354; it reads EISS. Position 387 (serine 387) interacts with L-serine.

Belongs to the class-II aminoacyl-tRNA synthetase family. Type-1 seryl-tRNA synthetase subfamily. In terms of assembly, homodimer. The tRNA molecule binds across the dimer.

It is found in the cytoplasm. The enzyme catalyses tRNA(Ser) + L-serine + ATP = L-seryl-tRNA(Ser) + AMP + diphosphate + H(+). The catalysed reaction is tRNA(Sec) + L-serine + ATP = L-seryl-tRNA(Sec) + AMP + diphosphate + H(+). Its pathway is aminoacyl-tRNA biosynthesis; selenocysteinyl-tRNA(Sec) biosynthesis; L-seryl-tRNA(Sec) from L-serine and tRNA(Sec): step 1/1. Catalyzes the attachment of serine to tRNA(Ser). Is also able to aminoacylate tRNA(Sec) with serine, to form the misacylated tRNA L-seryl-tRNA(Sec), which will be further converted into selenocysteinyl-tRNA(Sec). The polypeptide is Serine--tRNA ligase (Francisella tularensis subsp. novicida (strain U112)).